Consider the following 220-residue polypeptide: MGISRDSMHKRRATGGKQKAWRKKRKYELGRQPANTKLSSNKTVRRVRVRGGNVKWRALRLDTGNYSWGSEAVTRKTRILDVVYNASNNELVRTQTLVKSAIVQVDAAPFKQWYLTHYGVDIGRKKKAPAAKKDAEGQDAEATTEEAKKSNHVVRKLEKRQQGRTLDAHIEEQFGSGRLLACISSRPGQCGRADGYILEGKELEFYMKKLQRKKGKGASA.

2 disordered regions span residues M1–N41 and A131–N151. Basic residues predominate over residues M8–K26.

Belongs to the eukaryotic ribosomal protein eS8 family.

In Oryza sativa subsp. japonica (Rice), this protein is Small ribosomal subunit protein eS8 (RPS8).